Consider the following 95-residue polypeptide: High mobility group nucleosome-binding domain-containing protein 3 (95 aa).

Basic and acidic residues-rich tracts occupy residues Met-1 to Arg-25, Pro-39 to Gly-53, and Gly-62 to Lys-72. The tract at residues Met-1–His-95 is disordered. Ser-6 carries the post-translational modification Phosphoserine. A Phosphoserine modification is found at Ser-78.

Belongs to the HMGN family. Interacts with the ligand binding domain of the thyroid receptor (TR) (in vitro). Requires the presence of thyroid hormone for its interaction. Interacts with transcriptional regulator SEHBP. Interacts with nucleosomes.

The protein resides in the nucleus. Binds to nucleosomes, regulating chromatin structure and consequently, chromatin-dependent processes such as transcription, DNA replication and DNA repair. Affects both insulin and glucagon levels and modulates the expression of pancreatic genes involved in insulin secretion. Regulates the expression of the glucose transporter SLC2A2 by binding specifically to its promoter region and recruiting PDX1 and additional transcription factors. Regulates the expression of SLC6A9, a glycine transporter which regulates the glycine concentration in synaptic junctions in the central nervous system, by binding to its transcription start site. May play a role in ocular development and astrocyte function. In Rattus norvegicus (Rat), this protein is High mobility group nucleosome-binding domain-containing protein 3 (Hmgn3).